Here is a 315-residue protein sequence, read N- to C-terminus: Protein OPG185 (315 aa).

A signal peptide spans 1–16 (MTRLPILLLLISLVYA). Residues 17-121 (TPFPQTSKKI…NDTDKVDYEE (105 aa)) enclose the Ig-like V-type domain. Residues 17–279 (TPFPQTSKKI…SNYKTKDFVE (263 aa)) lie on the Virion surface side of the membrane. An intrachain disulfide couples C34 to C103. N37, N69, N112, and N161 each carry an N-linked (GlcNAc...) asparagine; by host glycan. Residues 193-202 (NTVSASSGES) show a composition bias toward polar residues. Residues 193–213 (NTVSASSGESTTDETPEPITD) are disordered. N-linked (GlcNAc...) asparagine; by host glycosylation is present at N254. Residues 280–303 (IFGITALIILSAVAIFCITYYIYN) form a helical membrane-spanning segment. Over 304–315 (KRSRKYKTENKV) the chain is Intravirion.

The protein belongs to the orthopoxvirus OPG185 family. In terms of assembly, heterodimerizes with OPG040. The heterodimer OPG185-OPG040 interacts with components of the entry fusion complex OPG143 and OPG094. Heterodimer with C3/VPC protein; disulfide-linked. Post-translationally, glycosylated; contains phosphate and sulfate-substituted glycans. O-glycosylation is required for hemagglutination and hemadsorption activities of infected cell membranes.

Its subcellular location is the virion membrane. The protein resides in the host membrane. Functionally, prevents cell to cell fusion by interacting with and directing the viral OPG040 protein on the host plasma membrane. The OPG185-OPG040 complex associates with components of the entry fusion complex (EFC) presumably to avoid superinfection and syncytium formation. Via its interaction with C3/VCP protein, protects the infected cell and probably also the extracellular enveloped virus from complement attack. The polypeptide is Protein OPG185 (OPG185) (Homo sapiens (Human)).